The chain runs to 989 residues: Bifunctional glutamine synthetase adenylyltransferase/adenylyl-removing enzyme (989 aa).

The interval 1 to 473 is adenylyl removase; the sequence is MRGPLEPDSA…HYANLFEDVA (473 aa). The interval 479 to 989 is adenylyl transferase; the sequence is DADLMFPPDE…FERILETAAE (511 aa).

This sequence belongs to the GlnE family. Mg(2+) is required as a cofactor.

The enzyme catalyses [glutamine synthetase]-O(4)-(5'-adenylyl)-L-tyrosine + phosphate = [glutamine synthetase]-L-tyrosine + ADP. It catalyses the reaction [glutamine synthetase]-L-tyrosine + ATP = [glutamine synthetase]-O(4)-(5'-adenylyl)-L-tyrosine + diphosphate. In terms of biological role, involved in the regulation of glutamine synthetase GlnA, a key enzyme in the process to assimilate ammonia. When cellular nitrogen levels are high, the C-terminal adenylyl transferase (AT) inactivates GlnA by covalent transfer of an adenylyl group from ATP to specific tyrosine residue of GlnA, thus reducing its activity. Conversely, when nitrogen levels are low, the N-terminal adenylyl removase (AR) activates GlnA by removing the adenylyl group by phosphorolysis, increasing its activity. The regulatory region of GlnE binds the signal transduction protein PII (GlnB) which indicates the nitrogen status of the cell. The protein is Bifunctional glutamine synthetase adenylyltransferase/adenylyl-removing enzyme of Xanthobacter autotrophicus (strain ATCC BAA-1158 / Py2).